We begin with the raw amino-acid sequence, 368 residues long: Transcription factor TGA1 (368 aa).

Polar residues predominate over residues 53-65 (LDNNVSEDTSHGT). Residues 53–83 (LDNNVSEDTSHGTAGTPHMFDQEASTSRHPD) form a disordered region. Positions 82-145 (PDKIQRRLAQ…NGIDTNSLGF (64 aa)) constitute a bZIP domain. Coiled-coil stretches lie at residues 83 to 131 (DKIQ…RQQG) and 261 to 281 (NLKQ…EKLQ). Residues 84–104 (KIQRRLAQNREAARKSRLRKK) form a basic motif region. The segment at 110–124 (LETSRLKLIQLEQEL) is leucine-zipper. In terms of domain architecture, DOG1 spans 153–363 (IAAFEMEYGH…RALSSSWATR (211 aa)). A disulfide bridge links C260 with C266.

The protein belongs to the bZIP family. As to quaternary structure, binds DNA as a dimer. The reduced form interacts with NPR1. As to expression, predominantly expressed in roots.

It is found in the nucleus. Its function is as follows. Transcriptional activator that binds specifically to the DNA sequence 5'-TGACG-3'. Recognizes ocs elements like the as-1 motif of the cauliflower mosaic virus 35S promoter. Binding to the as-1-like cis elements mediate auxin- and salicylic acid-inducible transcription. May be involved in the induction of the systemic acquired resistance (SAR) via its interaction with NPR1. Could also bind to the Hex-motif (5'-TGACGTGG-3') another cis-acting element found in plant histone promoters. This chain is Transcription factor TGA1 (TGA1), found in Arabidopsis thaliana (Mouse-ear cress).